The sequence spans 538 residues: 2-isopropylmalate synthase (538 aa).

Residues 6-277 (LIIFDTTLRD…DSTVPLSTID (272 aa)) enclose the Pyruvate carboxyltransferase domain. The Mn(2+) site is built by D15, H206, H208, and N242. Residues 406–538 (RLEQVQVSCG…AHPDAAAQKL (133 aa)) are regulatory domain.

It belongs to the alpha-IPM synthase/homocitrate synthase family. LeuA type 1 subfamily. Homodimer. Mn(2+) is required as a cofactor.

The protein localises to the cytoplasm. It catalyses the reaction 3-methyl-2-oxobutanoate + acetyl-CoA + H2O = (2S)-2-isopropylmalate + CoA + H(+). It functions in the pathway amino-acid biosynthesis; L-leucine biosynthesis; L-leucine from 3-methyl-2-oxobutanoate: step 1/4. In terms of biological role, catalyzes the condensation of the acetyl group of acetyl-CoA with 3-methyl-2-oxobutanoate (2-ketoisovalerate) to form 3-carboxy-3-hydroxy-4-methylpentanoate (2-isopropylmalate). The chain is 2-isopropylmalate synthase from Gloeobacter violaceus (strain ATCC 29082 / PCC 7421).